Consider the following 63-residue polypeptide: Large ribosomal subunit protein bL35 (63 aa).

This sequence belongs to the bacterial ribosomal protein bL35 family.

The protein is Large ribosomal subunit protein bL35 of Campylobacter fetus subsp. fetus (strain 82-40).